A 185-amino-acid chain; its full sequence is Elongation factor P (185 aa).

This sequence belongs to the elongation factor P family.

Its subcellular location is the cytoplasm. The protein operates within protein biosynthesis; polypeptide chain elongation. Its function is as follows. Involved in peptide bond synthesis. Stimulates efficient translation and peptide-bond synthesis on native or reconstituted 70S ribosomes in vitro. Probably functions indirectly by altering the affinity of the ribosome for aminoacyl-tRNA, thus increasing their reactivity as acceptors for peptidyl transferase. The polypeptide is Elongation factor P (Deinococcus geothermalis (strain DSM 11300 / CIP 105573 / AG-3a)).